The following is a 194-amino-acid chain: Large ribosomal subunit protein uL18 (194 aa).

The protein belongs to the universal ribosomal protein uL18 family. As to quaternary structure, part of the 50S ribosomal subunit. Contacts the 5S and 23S rRNAs.

Functionally, this is one of the proteins that bind and probably mediate the attachment of the 5S RNA into the large ribosomal subunit, where it forms part of the central protuberance. The polypeptide is Large ribosomal subunit protein uL18 (Methanococcus aeolicus (strain ATCC BAA-1280 / DSM 17508 / OCM 812 / Nankai-3)).